The sequence spans 334 residues: DNA-directed RNA polymerase subunit alpha (334 aa).

The segment at M1–E233 is alpha N-terminal domain (alpha-NTD). Residues D263–L334 are alpha C-terminal domain (alpha-CTD).

This sequence belongs to the RNA polymerase alpha chain family. As to quaternary structure, in plastids the minimal PEP RNA polymerase catalytic core is composed of four subunits: alpha, beta, beta', and beta''. When a (nuclear-encoded) sigma factor is associated with the core the holoenzyme is formed, which can initiate transcription.

It localises to the plastid. The protein resides in the chloroplast. The enzyme catalyses RNA(n) + a ribonucleoside 5'-triphosphate = RNA(n+1) + diphosphate. Its function is as follows. DNA-dependent RNA polymerase catalyzes the transcription of DNA into RNA using the four ribonucleoside triphosphates as substrates. The chain is DNA-directed RNA polymerase subunit alpha from Chaetosphaeridium globosum (Charophycean green alga).